The sequence spans 302 residues: Glycine--tRNA ligase alpha subunit (302 aa).

Belongs to the class-II aminoacyl-tRNA synthetase family. As to quaternary structure, tetramer of two alpha and two beta subunits.

The protein localises to the cytoplasm. It catalyses the reaction tRNA(Gly) + glycine + ATP = glycyl-tRNA(Gly) + AMP + diphosphate. The sequence is that of Glycine--tRNA ligase alpha subunit from Enterococcus faecalis (strain ATCC 700802 / V583).